Reading from the N-terminus, the 254-residue chain is Imidazole glycerol phosphate synthase subunit HisF (254 aa).

Residues aspartate 11 and aspartate 130 contribute to the active site.

Belongs to the HisA/HisF family. In terms of assembly, heterodimer of HisH and HisF.

It is found in the cytoplasm. It carries out the reaction 5-[(5-phospho-1-deoxy-D-ribulos-1-ylimino)methylamino]-1-(5-phospho-beta-D-ribosyl)imidazole-4-carboxamide + L-glutamine = D-erythro-1-(imidazol-4-yl)glycerol 3-phosphate + 5-amino-1-(5-phospho-beta-D-ribosyl)imidazole-4-carboxamide + L-glutamate + H(+). Its pathway is amino-acid biosynthesis; L-histidine biosynthesis; L-histidine from 5-phospho-alpha-D-ribose 1-diphosphate: step 5/9. Functionally, IGPS catalyzes the conversion of PRFAR and glutamine to IGP, AICAR and glutamate. The HisF subunit catalyzes the cyclization activity that produces IGP and AICAR from PRFAR using the ammonia provided by the HisH subunit. This is Imidazole glycerol phosphate synthase subunit HisF from Trichlorobacter lovleyi (strain ATCC BAA-1151 / DSM 17278 / SZ) (Geobacter lovleyi).